The primary structure comprises 503 residues: N-fatty-acyl-amino acid synthase/hydrolase PM20D1 (503 aa).

The signal sequence occupies residues 1–24; the sequence is MAELLASLPAWAAVLLLFFATVSG. N-linked (GlcNAc...) asparagine glycosylation is present at Asn-72. His-125 serves as a coordination point for Zn(2+). Asp-127 is a catalytic residue. Asp-157 contributes to the Zn(2+) binding site. Residue Glu-191 is the Proton acceptor of the active site. Glu-192 and Asp-218 together coordinate Zn(2+). An N-linked (GlcNAc...) asparagine glycan is attached at Asn-443. His-465 is a binding site for Zn(2+).

It belongs to the peptidase M20A family. It depends on Zn(2+) as a cofactor. In addition to being detected in blood (at protein level), PM20D1 is also highly expressed in other tissues including brown adipocytes, liver and kidney. It is also expressed in small intestine, large intestine, heart and pancreas.

It localises to the secreted. The catalysed reaction is an N-acyl-L-amino acid + H2O = an L-alpha-amino acid + a carboxylate. The enzyme catalyses an N-acyl-aromatic L-alpha-amino acid + H2O = an aromatic L-alpha-amino acid + a carboxylate. It carries out the reaction N-(5Z,8Z,11Z,14Z)-eicosatetraenoyl-glycine + H2O = (5Z,8Z,11Z,14Z)-eicosatetraenoate + glycine. It catalyses the reaction N-hexadecanoyl-L-phenylalanine + H2O = hexadecanoate + L-phenylalanine. The catalysed reaction is N-octadecanoyl-L-phenylalanine + H2O = octadecanoate + L-phenylalanine. The enzyme catalyses N-(4Z,7Z,10Z,13Z,16Z,19Z-docosahexaenoyl)-L-phenylalanine + H2O = (4Z,7Z,10Z,13Z,16Z,19Z)-docosahexaenoate + L-phenylalanine. It carries out the reaction N-(9Z-octadecenoyl)-L-asparagine + H2O = L-asparagine + (9Z)-octadecenoate. It catalyses the reaction (9Z)-octadecenoate + glycine = N-(9Z-octadecenoyl)glycine + H2O. The catalysed reaction is N-(9Z-octadecenoyl)-L-lysine + H2O = L-lysine + (9Z)-octadecenoate. The enzyme catalyses N-(9Z-octadecenoyl)-L-methionine + H2O = (9Z)-octadecenoate + L-methionine. It carries out the reaction N-(9Z-octadecenoyl)-L-serine + H2O = L-serine + (9Z)-octadecenoate. It catalyses the reaction N-(9Z-octadecenoyl)-L-tryptophan + H2O = L-tryptophan + (9Z)-octadecenoate. The catalysed reaction is N-(9Z-octadecenoyl)-L-tyrosine + H2O = L-tyrosine + (9Z)-octadecenoate. The enzyme catalyses N-(9Z-octadecenoyl)-L-glutamine + H2O = L-glutamine + (9Z)-octadecenoate. It carries out the reaction N-(5Z,8Z,11Z,14Z-eicosatetraenoyl)-L-serine + H2O = (5Z,8Z,11Z,14Z)-eicosatetraenoate + L-serine. It catalyses the reaction (5Z,8Z,11Z,14Z)-eicosatetraenoate + L-phenylalanine = N-(5Z,8Z,11Z,14Z-eicosatetraenoyl)-L-phenylalanine + H2O. The catalysed reaction is N-(9Z-octadecenoyl)-L-leucine + H2O = L-leucine + (9Z)-octadecenoate. The enzyme catalyses L-phenylalanine + (9Z)-octadecenoate = N-(9Z-octadecenoyl)-L-phenylalanine + H2O. It functions in the pathway amino-acid metabolism. The protein operates within energy metabolism; electron transfer. Its pathway is lipid metabolism; fatty acid metabolism. Lipoproteins are powerful coactivators of PM20D1 activity in vitro and NAA biosynthesis in vivo. Functionally, secreted enzyme that regulates the endogenous N-fatty acyl amino acid (NAAs) tissue and circulating levels by functioning as a bidirectional NAA synthase/hydrolase. It condenses free fatty acids and free amino acids to generate NAAs and bidirectionally catalyzes the reverse hydrolysis reaction. Some of these NAAs stimulate oxidative metabolism via mitochondrial uncoupling, increasing energy expenditure in a UPC1-independent manner. Thereby, this secreted protein may indirectly regulate whole body energy expenditure. PM20D1 circulates in tight association with both low- and high-density (LDL and HDL,respectively) lipoprotein particles. The protein is N-fatty-acyl-amino acid synthase/hydrolase PM20D1 of Mus musculus (Mouse).